We begin with the raw amino-acid sequence, 91 residues long: DNA-directed RNA polymerase subunit omega (91 aa).

This sequence belongs to the RNA polymerase subunit omega family. The RNAP catalytic core consists of 2 alpha, 1 beta, 1 beta' and 1 omega subunit. When a sigma factor is associated with the core the holoenzyme is formed, which can initiate transcription.

The enzyme catalyses RNA(n) + a ribonucleoside 5'-triphosphate = RNA(n+1) + diphosphate. Promotes RNA polymerase assembly. Latches the N- and C-terminal regions of the beta' subunit thereby facilitating its interaction with the beta and alpha subunits. This chain is DNA-directed RNA polymerase subunit omega, found in Syntrophus aciditrophicus (strain SB).